The chain runs to 192 residues: Small ribosomal subunit protein eS7 (192 aa).

It belongs to the eukaryotic ribosomal protein eS7 family.

The protein is Small ribosomal subunit protein eS7 (RpS7) of Anopheles gambiae (African malaria mosquito).